The primary structure comprises 495 residues: Cytoplasmic alpha-amylase (495 aa).

Ca(2+) contacts are provided by N104 and D198. The active-site Nucleophile is the D235. H239 contributes to the Ca(2+) binding site. E265 functions as the Proton donor in the catalytic mechanism.

This sequence belongs to the glycosyl hydrolase 13 family. In terms of assembly, monomer. The cofactor is Ca(2+).

The protein resides in the cytoplasm. The enzyme catalyses Endohydrolysis of (1-&gt;4)-alpha-D-glucosidic linkages in polysaccharides containing three or more (1-&gt;4)-alpha-linked D-glucose units.. This is Cytoplasmic alpha-amylase (amyA) from Escherichia coli (strain K12).